Consider the following 183-residue polypeptide: Ribosome rescue factor SmrB (183 aa).

Positions 98 to 173 (LDLHGLTQLQ…GDAALLVLIE (76 aa)) constitute a Smr domain.

Belongs to the SmrB family. Associates with collided ribosomes, but not with correctly translating polysomes.

In terms of biological role, acts as a ribosome collision sensor. Detects stalled/collided disomes (pairs of ribosomes where the leading ribosome is stalled and a second ribosome has collided with it) and endonucleolytically cleaves mRNA at the 5' boundary of the stalled ribosome. Stalled/collided disomes form a new interface (primarily via the 30S subunits) that binds SmrB. Cleaved mRNA becomes available for tmRNA ligation, leading to ribosomal subunit dissociation and rescue of stalled ribosomes. The chain is Ribosome rescue factor SmrB from Salmonella paratyphi A (strain ATCC 9150 / SARB42).